The sequence spans 300 residues: Estradiol 17-beta-dehydrogenase 11 (300 aa).

The N-terminal stretch at 1–19 (MKFLLDILLLLPLLIVCSL) is a signal peptide. NADP(+) is bound at residue 40–64 (LITGAGHGIGRLTAYEFAKLKSKLV). S172 provides a ligand contact to substrate. Y185 acts as the Proton acceptor in catalysis.

The protein belongs to the short-chain dehydrogenases/reductases (SDR) family. 17-beta-HSD 3 subfamily. Present at high level in steroidogenic cells such as syncytiotrophoblasts, sebaceous gland, Leydig cells, and granulosa cells of the dominant follicle and corpus luteum. In lung, it is detected in the ciliated epithelium and in acini of adult trachea, in bronchioles, but not in alveoli. In the eye, it is detected in the nonpigmented epithelium of the ciliary body and, at lower level, in the inner nuclear layer of the retina (at protein level). Widely expressed. Highly expressed in retina, pancreas, kidney, liver, lung, adrenal, small intestine, ovary and heart.

It localises to the endoplasmic reticulum. It is found in the lipid droplet. It carries out the reaction 17beta-estradiol + NAD(+) = estrone + NADH + H(+). It catalyses the reaction 17beta-estradiol + NADP(+) = estrone + NADPH + H(+). Its function is as follows. Can convert androstan-3-alpha,17-beta-diol (3-alpha-diol) to androsterone in vitro, suggesting that it may participate in androgen metabolism during steroidogenesis. May act by metabolizing compounds that stimulate steroid synthesis and/or by generating metabolites that inhibit it. Has no activity toward DHEA (dehydroepiandrosterone), or A-dione (4-androste-3,17-dione), and only a slight activity toward testosterone to A-dione. Tumor-associated antigen in cutaneous T-cell lymphoma. In Homo sapiens (Human), this protein is Estradiol 17-beta-dehydrogenase 11 (HSD17B11).